A 561-amino-acid polypeptide reads, in one-letter code: Asparagine synthetase [glutamine-hydrolyzing] (561 aa).

Cysteine 2 (for GATase activity) is an active-site residue. One can recognise a Glutamine amidotransferase type-2 domain in the interval 2-191 (CGIWALFGSD…PGHYEVLDLK (190 aa)). L-glutamine contacts are provided by residues 49-53 (RLAVV), 75-77 (NGE), and aspartate 97. In terms of domain architecture, Asparagine synthetase spans 213 to 536 (HALYDNVEKL…PGRADWLSHY (324 aa)). ATP is bound by residues leucine 256, isoleucine 288, and 363-364 (SG). At lysine 385 the chain carries N6-acetyllysine. Threonine 545 bears the Phosphothreonine mark. Position 557 is a phosphoserine (serine 557).

The catalysed reaction is L-aspartate + L-glutamine + ATP + H2O = L-asparagine + L-glutamate + AMP + diphosphate + H(+). It participates in amino-acid biosynthesis; L-asparagine biosynthesis; L-asparagine from L-aspartate (L-Gln route): step 1/1. This Pongo abelii (Sumatran orangutan) protein is Asparagine synthetase [glutamine-hydrolyzing] (ASNS).